We begin with the raw amino-acid sequence, 482 residues long: Glutamyl-tRNA(Gln) amidotransferase subunit A (482 aa).

Residues Lys75 and Ser150 each act as charge relay system in the active site. Ser174 serves as the catalytic Acyl-ester intermediate.

Belongs to the amidase family. GatA subfamily. In terms of assembly, heterotrimer of A, B and C subunits.

The enzyme catalyses L-glutamyl-tRNA(Gln) + L-glutamine + ATP + H2O = L-glutaminyl-tRNA(Gln) + L-glutamate + ADP + phosphate + H(+). Functionally, allows the formation of correctly charged Gln-tRNA(Gln) through the transamidation of misacylated Glu-tRNA(Gln) in organisms which lack glutaminyl-tRNA synthetase. The reaction takes place in the presence of glutamine and ATP through an activated gamma-phospho-Glu-tRNA(Gln). This chain is Glutamyl-tRNA(Gln) amidotransferase subunit A, found in Cyanothece sp. (strain PCC 7425 / ATCC 29141).